The following is a 289-amino-acid chain: Polyisoprenoid diphosphate/phosphate phosphohydrolase PLPP6 (289 aa).

The interval 1 to 81 is disordered; sequence MQSPRRNAEG…SSQALPPQLP (81 aa). The Cytoplasmic portion of the chain corresponds to 1-126; the sequence is MQSPRRNAEG…ESSSWGSMRP (126 aa). Serine 23, serine 30, and serine 64 each carry phosphoserine. A helical transmembrane segment spans residues 127 to 147; the sequence is LMKLLEISGHGIPWLLGTLYC. Residues 148–158 lie on the Lumenal side of the membrane; that stretch reads LSRSDSWAGRE. The chain crosses the membrane as a helical span at residues 159–179; it reads VLMNLLFALLLDLLLVSLIKG. Residues 178–186 are phosphatase sequence motif I; sequence KGLVRRRRP. Residues 180-222 are Cytoplasmic-facing; sequence LVRRRRPAHNQMDMFFTISVDKYSFPSGHTTRAALVSRFILNH. Residues 205-208 form a phosphatase sequence motif II region; the sequence is PSGH. The Proton donors role is filled by histidine 208. Residues 223–243 form a helical membrane-spanning segment; it reads LVLAIPLRVLVVLWAFILGLS. The phosphatase sequence motif III stretch occupies residues 243–254; sequence SRVMLGRHNVTD. The Lumenal segment spans residues 244–254; the sequence is RVMLGRHNVTD. The active-site Nucleophile is the histidine 250. Residues 255-275 traverse the membrane as a helical segment; it reads VAFGFFLGYMQYSIVDYCWLS. The Cytoplasmic segment spans residues 276–289; the sequence is PRTAPVLFVLWNQP.

The protein belongs to the PA-phosphatase related phosphoesterase family. Phosphorylation by PKC activates the phosphatase activity towards presqualene diphosphate.

Its subcellular location is the endoplasmic reticulum membrane. The protein localises to the nucleus envelope. It localises to the nucleus inner membrane. It catalyses the reaction presqualene diphosphate + H2O = presqualene phosphate + phosphate + H(+). It carries out the reaction presqualene phosphate + H2O = presqualene alcohol + phosphate. The enzyme catalyses (2E,6E)-farnesyl diphosphate + H2O = (2E,6E)-farnesyl phosphate + phosphate + H(+). The catalysed reaction is (2E,6E)-farnesyl phosphate + H2O = (2E,6E)-farnesol + phosphate. It catalyses the reaction (2E,6E,10E)-geranylgeranyl diphosphate + H2O = (2E,6E,10E)-geranylgeranyl phosphate + phosphate + H(+). It carries out the reaction (2E,6E,10E)-geranylgeranyl phosphate + H2O = (2E,6E,10E)-geranylgeraniol + phosphate. The enzyme catalyses (2E)-geranyl diphosphate + H2O = (2E)-geranyl phosphate + phosphate + H(+). The catalysed reaction is (2E)-geranyl phosphate + H2O = (2E)-geraniol + phosphate. It catalyses the reaction 1,2-dihexadecanoyl-sn-glycero-3-phosphate + H2O = 1,2-dihexadecanoyl-sn-glycerol + phosphate. Functionally, magnesium-independent polyisoprenoid diphosphatase that catalyzes the sequential dephosphorylation of presqualene, farnesyl, geranyl and geranylgeranyl diphosphates. Functions in the innate immune response through the dephosphorylation of presqualene diphosphate which acts as a potent inhibitor of the signaling pathways contributing to polymorphonuclear neutrophils activation. May regulate the biosynthesis of cholesterol and related sterols by dephosphorylating presqualene and farnesyl diphosphate, two key intermediates in this biosynthetic pathway. May also play a role in protein prenylation by acting on farnesyl diphosphate and its derivative geranylgeranyl diphosphate, two precursors for the addition of isoprenoid anchors to membrane proteins. Has a lower activity towards phosphatidic acid (PA), but through phosphatidic acid dephosphorylation may participate in the biosynthesis of phospholipids and triacylglycerols. May also act on ceramide-1-P, lysophosphatidic acid (LPA) and sphing-4-enine 1-phosphate/sphingosine-1-phosphate. This chain is Polyisoprenoid diphosphate/phosphate phosphohydrolase PLPP6, found in Bos taurus (Bovine).